A 541-amino-acid chain; its full sequence is Serine/threonine-protein kinase akt-1 (541 aa).

One can recognise a PH domain in the interval 15 to 118 (DVVIEGWLHK…WIHAIESISK (104 aa)). Positions 193-450 (FDFLKVLGKG…ALEICRADFF (258 aa)) constitute a Protein kinase domain. Residues 199–207 (LGKGTFGKV) and K222 contribute to the ATP site. Residue D316 is the Proton acceptor of the active site. At T350 the chain carries Phosphothreonine. One can recognise an AGC-kinase C-terminal domain in the interval 451 to 528 (RTVDWEATYR…HNVMGSINRI (78 aa)). Phosphoserine is present on S517.

This sequence belongs to the protein kinase superfamily. AGC Ser/Thr protein kinase family. RAC subfamily. As to quaternary structure, interacts with pdk-1, sgk-1, akt-2 and daf-16. Part of a complex containing sgk-1, akt-1 and akt-2. Interacts with cmd-1 in the presence of Ca(2+). Interacts with let-92 phosphatase regulatory subunit pptr-1. Mg(2+) serves as cofactor. As to expression, expressed in neurons, muscle cells of the pharynx, rectal gland cells, vulva and spermatheca.

The enzyme catalyses L-seryl-[protein] + ATP = O-phospho-L-seryl-[protein] + ADP + H(+). It carries out the reaction L-threonyl-[protein] + ATP = O-phospho-L-threonyl-[protein] + ADP + H(+). Its activity is regulated as follows. Phosphorylated and activated by pdk-1. Its function is as follows. Acts downstream of PI3 kinase age-1 and kinase pdk-1 in the daf-2/insulin receptor-like transduction pathway. Phosphorylates Forkhead-related daf-16 and the longevity-promoting skn-1 transcription factors, which inhibits their entry into the nucleus and antagonizes their functions. Plays a role in maintaining the gonadal basement membrane through it's role in inhibiting daf-16 activity. Has an essential role in regulating developmental arrest at the dauer stage. Plays a role in immune function and pathogen resistance. Regulates salt chemotaxis learning. Downstream of age-1 and together with akt-2 and sgk-1, promotes cell survival during embryonic development. In Caenorhabditis elegans, this protein is Serine/threonine-protein kinase akt-1.